The sequence spans 221 residues: Probable septum site-determining protein MinC (221 aa).

The protein belongs to the MinC family. In terms of assembly, interacts with MinD and FtsZ.

Functionally, cell division inhibitor that blocks the formation of polar Z ring septums. Rapidly oscillates between the poles of the cell to destabilize FtsZ filaments that have formed before they mature into polar Z rings. Prevents FtsZ polymerization. The protein is Probable septum site-determining protein MinC of Shewanella loihica (strain ATCC BAA-1088 / PV-4).